Here is a 354-residue protein sequence, read N- to C-terminus: MKFQILSVAALASLASAVSDALDKRDSPLDVSLEVTDNTNVKATIKNTGTEDLKLFKTGTFLDDSHVEKVEVFRSGKQPEQVAFEGLRLRVSTANLDESAFKILKAGETIEAAFDIAVAHDLSVGGDFDLLTEGAFAYANLDSTSIAGAVPFTSNKVTTAVDGAKAGKVRRDWIDLAKRTIVQSDCTGSRGTATRTALSNCASLARTAANAAVNNSAKLNEYFKSTSSSTASSVQTVYNRIATQCGSTTSGDSTQYCSDILGACAGGVLAYTSPSTSQMVNCPLFFNQSPLSSQCHAQDQATTILHEMTHLRQVKGTSDYGGYGYQFVRSLSAAQNLNHADTYTLFAQALYAQC.

The signal sequence occupies residues 1–19 (MKFQILSVAALASLASAVS). Positions 20–182 (DALDKRDSPL…WIDLAKRTIV (163 aa)) are excised as a propeptide. 2 disulfides stabilise this stretch: Cys186–Cys257 and Cys264–Cys282. An N-linked (GlcNAc...) asparagine glycan is attached at Asn214. Residue His306 participates in Zn(2+) binding. Glu307 is a catalytic residue. His310 contributes to the Zn(2+) binding site.

Belongs to the peptidase M35 family. Zn(2+) is required as a cofactor.

It localises to the secreted. The enzyme catalyses Preferential cleavage of bonds with hydrophobic residues in P1'. Also 3-Asn-|-Gln-4 and 8-Gly-|-Ser-9 bonds in insulin B chain.. Functionally, secreted metalloproteinase that allows assimilation of proteinaceous substrates. Shows high activities on basic nuclear substrates such as histone and protamine. The chain is Neutral protease 2 homolog SNOG_02177 from Phaeosphaeria nodorum (strain SN15 / ATCC MYA-4574 / FGSC 10173) (Glume blotch fungus).